Here is a 547-residue protein sequence, read N- to C-terminus: Mucin-13 (547 aa).

The span at 1–210 (MSQSSGGTST…TVTSSSSTGS (210 aa)) shows a compositional bias: low complexity. A disordered region spans residues 1-218 (MSQSSGGTST…GSNDPCNSNP (218 aa)). The 40-residue stretch at 210 to 249 (SNDPCNSNPCKSPASCVKLYDSYFCLCLEGYYYNNSSSCV) folds into the EGF-like 1 domain. Intrachain disulfides connect cysteine 214-cysteine 225, cysteine 219-cysteine 234, and cysteine 236-cysteine 248. N-linked (GlcNAc...) asparagine glycans are attached at residues asparagine 243, asparagine 244, and asparagine 263. The SEA domain maps to 250–366 (KGTTFPGEIG…ERYFQQDRCD (117 aa)). EGF-like domains follow at residues 361-401 (QQDR…PFCV) and 401-441 (VAPT…GKCE). 5 cysteine pairs are disulfide-bonded: cysteine 365–cysteine 378, cysteine 370–cysteine 384, cysteine 386–cysteine 400, cysteine 409–cysteine 427, and cysteine 429–cysteine 440. Residues 459–479 (ILTIVGTIAGAFILILLIVFI) traverse the membrane as a helical segment. Residues 480–547 (VSMRSKNKKK…NHRSMPRPDY (68 aa)) are Cytoplasmic-facing. The interval 525 to 547 (KTGVPSQTSNPYANHRSMPRPDY) is disordered.

As to quaternary structure, homodimer of beta subunits. In terms of processing, cleaved into two subunits, alpha and beta, probably between the first EGF domain and the SEA domain. Beta subunit contains the cytoplasmic tail and alpha subunit the extracellular tail. The homooligomerization into dimers is dependent on intrachain disulfide bonds. Post-translationally, highly glycosylated.

The protein resides in the cell membrane. Its subcellular location is the secreted. Its function is as follows. Epithelial and hemopoietic transmembrane mucin that may play a role in cell signaling. This is Mucin-13 (Muc13) from Rattus norvegicus (Rat).